The primary structure comprises 260 residues: UPF0246 protein Mmwyl1_3597 (260 aa).

Belongs to the UPF0246 family.

This is UPF0246 protein Mmwyl1_3597 from Marinomonas sp. (strain MWYL1).